A 990-amino-acid polypeptide reads, in one-letter code: Pentatricopeptide repeat-containing protein At4g33170 (990 aa).

PPR repeat units lie at residues 73–107, 109–139, 144–178, 179–209, 210–244, 279–313, 314–348, 349–379, 380–414, 415–450, 451–477, 481–515, 516–550, 551–581, 582–616, 617–651, 652–682, 683–717, 718–753, and 754–788; these read ERFL…DLVS, NSIL…LRQD, SRMT…GLDG, DEFV…MPYR, DVVL…GLNP, EIIF…DVEC, DQVT…GLDL, MLTV…MSER, DLIS…GLKP, DQYT…NNVS, DSFV…LFER, DLVA…GERS, DDFT…GYDL, DLWV…IPVP, DDVA…GVLP, DEFT…NCTN, DPFV…IEMM, NITA…GIKP, DKVT…GIKP, and EIEH…ASAS. The type E motif stretch occupies residues 789 to 864; the sequence is MYRTLLAACR…DPGFSWIEVK (76 aa). The segment at 865-895 is type E(+) motif; it reads NKIHIFVVDDRSNRQTELIYRKVKDMIRDIK. Residues 896 to 990 form a type DYW motif region; it reads QEGYVPETDF…DGICSCGDYW (95 aa).

It belongs to the PPR family. PCMP-H subfamily.

The protein is Pentatricopeptide repeat-containing protein At4g33170 (PCMP-H53) of Arabidopsis thaliana (Mouse-ear cress).